The chain runs to 37 residues: Large ribosomal subunit protein bL36c (37 aa).

This sequence belongs to the bacterial ribosomal protein bL36 family.

The protein resides in the plastid. It localises to the chloroplast. The sequence is that of Large ribosomal subunit protein bL36c (rpl36) from Anthoceros angustus (Hornwort).